The primary structure comprises 347 residues: Pre-B-cell leukemia transcription factor 1 (347 aa).

Residues 1-37 (MDDQPRLMHSHPGVGMAGHPSLSQHMQDGTGANEGDV) are disordered. Residues 38–232 (GRKQDIGDIL…VMILRSRFLD (195 aa)) enclose the PBC domain. The PBC-A stretch occupies residues 45-124 (DILQQIMTIT…EGVAGPEKGG (80 aa)). The tract at residues 127–232 (AAAAAAAAAS…VMILRSRFLD (106 aa)) is PBC-B. The homeobox; TALE-type DNA-binding region spans 233-295 (ARRKRRNFNK…NKRIRYKKNI (63 aa)). Residues 318-331 (VHGSQANSPSTPSS) show a composition bias toward polar residues. Positions 318–347 (VHGSQANSPSTPSSAGGYPSPCYQSDRRIQ) are disordered.

The protein belongs to the TALE/PBX homeobox family. As to quaternary structure, forms a heterodimer with isoform 2 of meis1; the interaction is necessary for neural fate induction. Shows broad, weak expression from blastula through gastrula stages. At stage 14/15, expressed in a broad arc that gives rise to the forebrain and eyes. More intensely expressed in the lateral neural folds (presumptive neural crest) and as horizontal stripes in the posterior neural plate that give rise to the hindbrain. As development proceeds, expression progresses posteriorly along the neural folds and at stage 21, expression is pronounced in the prospective hindbrain and in migratory neural crest cells. At later stages (stage 26), expression becomes intense within the dorsal portion of the forebrain, and in the optic cup, caudal branchial arch, peripheral to the pronephric anlage, and in the dorsal anterior half of the spinal cord. Expression remains robust in the hindbrain but gradually becomes more restricted. At stage 28, expressed in the dorsal lateral portion of the neural tube and in the somatic layer of the lateral plate mesoderm that surrounds the pronephric anlage.

Its subcellular location is the nucleus. Functionally, acts as a transcriptional activator in complex with isoform 2 of meis1, to induce posterior neural and neural crest gene expression, and thereby specify hindbrain and neural crest cell fate. Binds to a highly conserved region in the promoter of the neural crest gene zic3. Required for the nuclear transport or retention of isoform 2 of meis1. This Xenopus laevis (African clawed frog) protein is Pre-B-cell leukemia transcription factor 1 (pbx1).